The primary structure comprises 510 residues: 2,3-bisphosphoglycerate-independent phosphoglycerate mutase (510 aa).

Mn(2+)-binding residues include D13 and S63. S63 acts as the Phosphoserine intermediate in catalysis. Substrate is bound by residues H124, 154 to 155 (RD), R186, R192, 262 to 265 (RADR), and K334. Residues D401, H405, D442, H443, and H461 each coordinate Mn(2+).

It belongs to the BPG-independent phosphoglycerate mutase family. As to quaternary structure, monomer. Mn(2+) serves as cofactor.

The enzyme catalyses (2R)-2-phosphoglycerate = (2R)-3-phosphoglycerate. It participates in carbohydrate degradation; glycolysis; pyruvate from D-glyceraldehyde 3-phosphate: step 3/5. Catalyzes the interconversion of 2-phosphoglycerate and 3-phosphoglycerate. The polypeptide is 2,3-bisphosphoglycerate-independent phosphoglycerate mutase (Aliivibrio fischeri (strain MJ11) (Vibrio fischeri)).